A 464-amino-acid chain; its full sequence is Glucose-6-phosphate isomerase (464 aa).

The Proton donor role is filled by Glu290. Catalysis depends on residues His319 and Lys433.

This sequence belongs to the GPI family.

It localises to the cytoplasm. It carries out the reaction alpha-D-glucose 6-phosphate = beta-D-fructose 6-phosphate. Its pathway is carbohydrate biosynthesis; gluconeogenesis. It functions in the pathway carbohydrate degradation; glycolysis; D-glyceraldehyde 3-phosphate and glycerone phosphate from D-glucose: step 2/4. Its function is as follows. Catalyzes the reversible isomerization of glucose-6-phosphate to fructose-6-phosphate. The polypeptide is Glucose-6-phosphate isomerase (Carboxydothermus hydrogenoformans (strain ATCC BAA-161 / DSM 6008 / Z-2901)).